The sequence spans 317 residues: Protein IMPACT-B (317 aa).

One can recognise an RWD domain in the interval 17–118 (EEIEALSSIY…EKIREFLTEK (102 aa)). The tract at residues 296–317 (DSTEETSKAGGKSKKPKSKKTK) is disordered. The segment covering 306–317 (GKSKKPKSKKTK) has biased composition (basic residues).

It belongs to the IMPACT family. Interacts with GCN1; prevents the interaction of GCN1 with EIF2AK4/GCN2 and inhibits EIF2AK4/GCN2 kinase activity. Interaction with RPL39; this interaction occurs in a GCN1-independent manner. Associates with ribosomes; this interaction occurs in a GCN1-independent manner. Associates with actin; this interaction occurs in a GCN1-independent manner.

Its subcellular location is the cytoplasm. In terms of biological role, translational regulator that ensures constant high levels of translation upon a variety of stress conditions, such as amino acid starvation, UV-C irradiation, proteasome inhibitor treatment and glucose deprivation. Plays a role as a negative regulator of the EIF2AK4/GCN2 kinase activity; impairs GCN1-mediated EIF2AK4/GCN2 activation, and hence EIF2AK4/GCN2-mediated eIF-2-alpha phosphorylation and subsequent down-regulation of protein synthesis. Plays a role in differentiation of neuronal cells by stimulating neurite outgrowth. This chain is Protein IMPACT-B (impact-B), found in Xenopus tropicalis (Western clawed frog).